Reading from the N-terminus, the 1049-residue chain is FERM, ARHGEF and pleckstrin domain-containing protein 1 (1049 aa).

A disordered region spans residues 1–37 (MGEIEQKPTPASRLGAPENSGISTLERGQKPPPTPSG). A phosphoserine mark is found at Ser-20 and Ser-23. A Phosphothreonine modification is found at Thr-24. The region spanning 40–320 (MTVKIQMLDD…EHHAFFRLFE (281 aa)) is the FERM domain. Phosphoserine occurs at positions 340, 373, 389, 403, 427, 433, and 437. Residues 361-537 (FERKHSKIHS…TDDEEEGRRK (177 aa)) are disordered. 2 stretches are compositionally biased toward polar residues: residues 371–395 (TRSL…SASL) and 402–412 (ESPSAQSCQQA). Residues 435–448 (SGSKAADGTAAAAP) show a composition bias toward low complexity. Polar residues-rich tracts occupy residues 473-492 (STGS…NSQG) and 499-514 (VTLS…QASP). Ser-513 and Ser-517 each carry phosphoserine. The DH domain occupies 543–734 (KAYYIAKEVS…TEMVAQLHGT (192 aa)). One can recognise a PH 1 domain in the interval 763 to 860 (EFIRLGSLSK…WLEDIQMAID (98 aa)). Residues Ser-837, Ser-876, and Ser-882 each carry the phosphoserine modification. The interval 866 to 908 (NGPTPELLASSPPDNKSPDEATAADQESEDDLSASRTSLERQA) is disordered. Thr-887 is modified (phosphothreonine). Ser-893, Ser-900, and Ser-903 each carry phosphoserine. One can recognise a PH 2 domain in the interval 936–1033 (ENQLSGNLLR…WMEVIRSATS (98 aa)).

As to quaternary structure, interacts with CADM1. Interacts with RAC1. In terms of tissue distribution, detected in forbrain (at protein level).

It is found in the cell membrane. Its subcellular location is the synapse. The protein localises to the synaptosome. The protein resides in the cytoplasm. It localises to the cytosol. It is found in the cell projection. Its subcellular location is the filopodium. The protein localises to the dendrite. The protein resides in the dendritic spine. Functionally, may play a role in semaphorin signaling. Functions as a guanine nucleotide exchange factor for RAC1. Plays a role in the assembly and disassembly of dendritic filopodia, the formation of dendritic spines, regulation of dendrite length and ultimately the formation of synapses. The chain is FERM, ARHGEF and pleckstrin domain-containing protein 1 (Farp1) from Rattus norvegicus (Rat).